The sequence spans 343 residues: Anthranilate phosphoribosyltransferase (343 aa).

5-phospho-alpha-D-ribose 1-diphosphate is bound by residues Gly-84, 87 to 88 (GD), Thr-92, 94 to 97 (NIST), 112 to 120 (KHGNRGVSS), and Ser-124. Gly-84 is an anthranilate binding site. Mg(2+) is bound at residue Ser-96. Asn-115 is an anthranilate binding site. Arg-170 provides a ligand contact to anthranilate. Mg(2+)-binding residues include Asp-229 and Glu-230.

It belongs to the anthranilate phosphoribosyltransferase family. In terms of assembly, homodimer. The cofactor is Mg(2+).

It catalyses the reaction N-(5-phospho-beta-D-ribosyl)anthranilate + diphosphate = 5-phospho-alpha-D-ribose 1-diphosphate + anthranilate. Its pathway is amino-acid biosynthesis; L-tryptophan biosynthesis; L-tryptophan from chorismate: step 2/5. Functionally, catalyzes the transfer of the phosphoribosyl group of 5-phosphorylribose-1-pyrophosphate (PRPP) to anthranilate to yield N-(5'-phosphoribosyl)-anthranilate (PRA). This Burkholderia ambifaria (strain ATCC BAA-244 / DSM 16087 / CCUG 44356 / LMG 19182 / AMMD) (Burkholderia cepacia (strain AMMD)) protein is Anthranilate phosphoribosyltransferase.